The following is a 281-amino-acid chain: NADPH-dependent 7-cyano-7-deazaguanine reductase (281 aa).

81 to 83 is a substrate binding site; that stretch reads VES. NADPH is bound at residue 83-84; sequence SK. Cys188 serves as the catalytic Thioimide intermediate. The active-site Proton donor is the Asp195. Position 227–228 (227–228) interacts with substrate; the sequence is HE. 256–257 is a binding site for NADPH; the sequence is RG. The segment at 261–281 is disordered; it reads INPLRTSHPQGLPRNMRTARQ.

The protein belongs to the GTP cyclohydrolase I family. QueF type 2 subfamily. In terms of assembly, homodimer.

The protein resides in the cytoplasm. The enzyme catalyses 7-aminomethyl-7-carbaguanine + 2 NADP(+) = 7-cyano-7-deazaguanine + 2 NADPH + 3 H(+). The protein operates within tRNA modification; tRNA-queuosine biosynthesis. Catalyzes the NADPH-dependent reduction of 7-cyano-7-deazaguanine (preQ0) to 7-aminomethyl-7-deazaguanine (preQ1). In Verminephrobacter eiseniae (strain EF01-2), this protein is NADPH-dependent 7-cyano-7-deazaguanine reductase.